The primary structure comprises 143 residues: Nucleoside diphosphate kinase (143 aa).

Residues Lys11, Phe59, Arg87, Thr93, Arg104, and Asn114 each contribute to the ATP site. His117 (pros-phosphohistidine intermediate) is an active-site residue.

The protein belongs to the NDK family. Homotetramer. The cofactor is Mg(2+).

It is found in the cytoplasm. It catalyses the reaction a 2'-deoxyribonucleoside 5'-diphosphate + ATP = a 2'-deoxyribonucleoside 5'-triphosphate + ADP. The catalysed reaction is a ribonucleoside 5'-diphosphate + ATP = a ribonucleoside 5'-triphosphate + ADP. Functionally, major role in the synthesis of nucleoside triphosphates other than ATP. The ATP gamma phosphate is transferred to the NDP beta phosphate via a ping-pong mechanism, using a phosphorylated active-site intermediate. This chain is Nucleoside diphosphate kinase, found in Escherichia coli O7:K1 (strain IAI39 / ExPEC).